The following is a 328-amino-acid chain: Malate dehydrogenase (328 aa).

11–17 (GAAGQIG) serves as a coordination point for NAD(+). 2 residues coordinate substrate: Arg-94 and Arg-100. NAD(+)-binding positions include Asn-107, Gln-114, and 131–133 (VGN). The substrate site is built by Asn-133 and Arg-164. Catalysis depends on His-189, which acts as the Proton acceptor.

It belongs to the LDH/MDH superfamily. MDH type 2 family.

It catalyses the reaction (S)-malate + NAD(+) = oxaloacetate + NADH + H(+). Its function is as follows. Catalyzes the reversible oxidation of malate to oxaloacetate. In Xanthomonas oryzae pv. oryzae (strain MAFF 311018), this protein is Malate dehydrogenase.